The primary structure comprises 838 residues: MGELFRSEEMTLAQLFLQSEAAYCCVSELGELGKVQFRDLNPDVNVFQRKFVNEVRRCEEMDRKLRFVEKEIRKANIPIMDTGENPEVPFPRDMIDLEANFEKIENELKEINTNQEALKRNFLELTELKFILRKTQQFFDEMADPDLLEESSSLLEPSEMGRGTPLRLGFVAGVINRERIPTFERMLWRVCRGNVFLRQAEIENPLEDPVTGDYVHKSVFIIFFQGDQLKNRVKKICEGFRASLYPCPETPQERKEMASGVNTRIDDLQMVLNQTEDHRQRVLQAAAKNIRVWFIKVRKMKAIYHTLNLCNIDVTQKCLIAEVWCPVTDLDSIQFALRRGTEHSGSTVPSILNRMQTNQTPPTYNKTNKFTYGFQNIVDAYGIGTYREINPAPYTIITFPFLFAVMFGDLGHGILMTLFAVWMVLKESRILSQKNENEMFSTIFSGRYIILLMGVFSIYTGLIYNDCFSKSLNIFGSSWSVRPMFDIYNWTEETLRGNPVLQLNPAVTGVFGGPYPFGIDPIWNIATNKLTFLNSFKMKMSVILGIIHMLFGVSLSLFNHTYFKKPLNIYFGFIPEIIFMTSLFGYLVILIFYKWTAYNAKTSEKAPSLLIHFINMFLFSYGDSGNSMLYSGQKGIQCFLVVVALLCVPWMLLFKPLVLRRQYLRRKHLGTLNFGGIRVGNGPTEEDAEIIQHDQLSTHSEDAEEPTEDEVFDFGDTMVHQAIHTIEYCLGCISNTASYLRLWALSLAHAQLSEVLWTMVIHIGLKVKSLAGGLALFFIFAAFATLTVAILLIMEGLSAFLHALRLHWVEFQNKFYSGTGFKFLPFSFEHIREGKFDD.

The Cytoplasmic segment spans residues Met-1–Glu-388. 2 positions are modified to phosphothreonine: Thr-250 and Thr-360. The residue at position 364 (Tyr-364) is a Phosphotyrosine. The chain crosses the membrane as a helical span at residues Ile-389 to Phe-407. At Gly-408–Asp-409 the chain is on the vacuolar side. A helical membrane pass occupies residues Leu-410–Lys-426. At Glu-427–Ser-441 the chain is on the cytoplasmic side. Residues Thr-442–Ser-471 traverse the membrane as a helical segment. Residues Leu-472–Ser-535 are Vacuolar-facing. A helical membrane pass occupies residues Phe-536 to Leu-555. Residues Ser-556–Phe-573 are Cytoplasmic-facing. The helical transmembrane segment at Ile-574 to Lys-594 threads the bilayer. At Trp-595 to Phe-639 the chain is on the vacuolar side. A helical transmembrane segment spans residues Leu-640 to Leu-659. Residues Arg-660 to Thr-725 lie on the Cytoplasmic side of the membrane. The chain crosses the membrane as a helical span at residues Ile-726 to Ala-750. The Vacuolar segment spans residues Gln-751 to Ala-771. Residues Gly-772 to Glu-810 traverse the membrane as a helical segment. Residues Phe-811–Asp-838 lie on the Cytoplasmic side of the membrane.

Belongs to the V-ATPase 116 kDa subunit family. V-ATPase is a heteromultimeric enzyme made up of two complexes: the ATP-hydrolytic V1 complex and the proton translocation V0 complex. The V1 complex consists of three catalytic AB heterodimers that form a heterohexamer, three peripheral stalks each consisting of EG heterodimers, one central rotor including subunits D and F, and the regulatory subunits C and H. The proton translocation complex V0 consists of the proton transport subunit a, a ring of proteolipid subunits c9c'', rotary subunit d, subunits e and f, and the accessory subunits ATP6AP1/Ac45 and ATP6AP2/PRR. Interacts with SPAAR. Expressed in brain (at protein level). In terms of tissue distribution, expressed heart, kidney, liver, spleen, and to a lesser extent in brain.

The protein localises to the cytoplasmic vesicle. Its subcellular location is the clathrin-coated vesicle membrane. It localises to the secretory vesicle. The protein resides in the synaptic vesicle membrane. It is found in the melanosome. In terms of biological role, subunit of the V0 complex of vacuolar(H+)-ATPase (V-ATPase), a multisubunit enzyme composed of a peripheral complex (V1) that hydrolyzes ATP and a membrane integral complex (V0) that translocates protons. V-ATPase is responsible for the acidification of various organelles, such as lysosomes, endosomes, the trans-Golgi network, and secretory granules, including synaptic vesicles. In certain cell types, can be exported to the plasma membrane, where it is involved in the acidification of the extracellular environment. Required for assembly and activity of the vacuolar ATPase. Through its action on compartment acidification, plays an essential role in neuronal development in terms of integrity and connectivity of neurons. The chain is V-type proton ATPase 116 kDa subunit a 1 (ATP6V0A1) from Bos taurus (Bovine).